Reading from the N-terminus, the 456-residue chain is Dihydroorotase (456 aa).

His-60 and His-62 together coordinate Zn(2+). Substrate-binding positions include 62–64 (HFR) and Asn-94. Residues Glu-146, His-180, His-234, and Asp-313 each contribute to the Zn(2+) site. Residue Asp-313 is part of the active site. His-317 contacts substrate.

The protein belongs to the metallo-dependent hydrolases superfamily. DHOase family. Class I DHOase subfamily. Requires Zn(2+) as cofactor.

It catalyses the reaction (S)-dihydroorotate + H2O = N-carbamoyl-L-aspartate + H(+). It participates in pyrimidine metabolism; UMP biosynthesis via de novo pathway; (S)-dihydroorotate from bicarbonate: step 3/3. In terms of biological role, catalyzes the reversible cyclization of carbamoyl aspartate to dihydroorotate. The polypeptide is Dihydroorotase (Methanosarcina mazei (strain ATCC BAA-159 / DSM 3647 / Goe1 / Go1 / JCM 11833 / OCM 88) (Methanosarcina frisia)).